Here is a 504-residue protein sequence, read N- to C-terminus: ATP synthase subunit alpha 2 (504 aa).

169 to 176 lines the ATP pocket; it reads GDRQTGKT.

Belongs to the ATPase alpha/beta chains family. As to quaternary structure, F-type ATPases have 2 components, CF(1) - the catalytic core - and CF(0) - the membrane proton channel. CF(1) has five subunits: alpha(3), beta(3), gamma(1), delta(1), epsilon(1). CF(0) has three main subunits: a(1), b(2) and c(9-12). The alpha and beta chains form an alternating ring which encloses part of the gamma chain. CF(1) is attached to CF(0) by a central stalk formed by the gamma and epsilon chains, while a peripheral stalk is formed by the delta and b chains.

The protein resides in the cell membrane. It carries out the reaction ATP + H2O + 4 H(+)(in) = ADP + phosphate + 5 H(+)(out). In terms of biological role, produces ATP from ADP in the presence of a proton gradient across the membrane. The alpha chain is a regulatory subunit. This is ATP synthase subunit alpha 2 from Listeria monocytogenes serovar 1/2a (strain ATCC BAA-679 / EGD-e).